The sequence spans 528 residues: Carboxysome shell carbonic anhydrase (528 aa).

Residues 17–47 (PIAPNPRWQKENPTAHGSTDTGGFGYNGGNE) are disordered. Zn(2+) is bound at residue Cys184. Asp186 acts as the Proton acceptor in catalysis. Zn(2+)-binding residues include His252 and Cys263.

It belongs to the beta-class carbonic anhydrase family. CsoSCA subfamily. As to quaternary structure, homodimer. Requires Zn(2+) as cofactor.

The protein localises to the carboxysome. It carries out the reaction hydrogencarbonate + H(+) = CO2 + H2O. Inhibited by ethoxyzolamide and dithiothreitol (in crude extracts upon expression in E.coli). Its function is as follows. Reversible hydration of carbon dioxide. This bacteria encodes at least 3 CA enzymes. Essential for chemolithotrophic carbon dioxide fixation, supplies CO(2) to RuBisCO (ribulose bisphosphate carboxylase, cbbL-cbbS) in the carboxysome. The protein is Carboxysome shell carbonic anhydrase of Hydrogenovibrio crunogenus (strain DSM 25203 / XCL-2) (Thiomicrospira crunogena).